Reading from the N-terminus, the 190-residue chain is Double zinc ribbon protein MJ0416 (190 aa).

The segment at 134-183 adopts a DZANK-type zinc-finger fold; that stretch reads CPNCNNYISDSWKYCAHCGAKLKEEEEEVLRCPNCKRPVQPEWIVCPYCG.

The chain is Double zinc ribbon protein MJ0416 from Methanocaldococcus jannaschii (strain ATCC 43067 / DSM 2661 / JAL-1 / JCM 10045 / NBRC 100440) (Methanococcus jannaschii).